The following is a 705-amino-acid chain: Structure-specific endonuclease subunit SLX1 homolog (705 aa).

In terms of domain architecture, GIY-YIG spans 4 to 90 (RFHCVYLLTS…TASARLRHAI (87 aa)). 2 disordered regions span residues 155–192 (RASS…DSKG) and 290–323 (ASFA…RVHT). 2 stretches are compositionally biased toward polar residues: residues 160-175 (RVGT…SLQG) and 310-320 (STGSRTPSPQR). The SLX1-type zinc finger occupies 446–526 (CSLCTLPLQP…PSQPCPCPLC (81 aa)). The span at 595 to 604 (KGAGEAPGAA) shows a compositional bias: low complexity. The disordered stretch occupies residues 595 to 628 (KGAGEAPGAASTVRASTMHVGPARRDAPRVSSPS).

The protein belongs to the SLX1 family. Forms a heterodimer with a member of the SLX4 family. The cofactor is a divalent metal cation.

The protein resides in the nucleus. Its function is as follows. Catalytic subunit of a heterodimeric structure-specific endonuclease that resolves DNA secondary structures generated during DNA repair and recombination. Has endonuclease activity towards branched DNA substrates, introducing single-strand cuts in duplex DNA close to junctions with ss-DNA. The chain is Structure-specific endonuclease subunit SLX1 homolog from Leishmania infantum.